Reading from the N-terminus, the 308-residue chain is uncharacterized protein (308 aa).

The first 28 residues, 1-28 (MILMKKFEIILFLFIAVLIFVFGYFVGA), serve as a signal peptide directing secretion.

This is an uncharacterized protein from Methanocaldococcus jannaschii (strain ATCC 43067 / DSM 2661 / JAL-1 / JCM 10045 / NBRC 100440) (Methanococcus jannaschii).